Reading from the N-terminus, the 288-residue chain is Scolexin B (288 aa).

A signal peptide spans 1 to 20 (MFASKLAVCSALALLAVAHA). The Peptidase S1 domain maps to 21 to 287 (APGGNDIQKI…VRDWIKKVTN (267 aa)). Residues 27 to 56 (IQKITKAPNVPTKAEGDAASKASAPAIPPK) are disordered. Cys-72 and Cys-88 are oxidised to a cystine. Residues His-87 and Asp-145 each act as charge relay system in the active site. Intrachain disulfides connect Cys-210/Cys-223 and Cys-235/Cys-264. Ser-239 functions as the Charge relay system in the catalytic mechanism.

Belongs to the peptidase S1 family.

The protein is Scolexin B of Heliothis virescens (Tobacco budworm moth).